Reading from the N-terminus, the 265-residue chain is Glutamate racemase 2 (265 aa).

Substrate-binding positions include 7–8 (DS) and 39–40 (YG). The Proton donor/acceptor role is filled by cysteine 70. A substrate-binding site is contributed by 71–72 (NT). Cysteine 182 acts as the Proton donor/acceptor in catalysis. 183–184 (TH) provides a ligand contact to substrate.

It belongs to the aspartate/glutamate racemases family.

It catalyses the reaction L-glutamate = D-glutamate. Its pathway is cell wall biogenesis; peptidoglycan biosynthesis. Functionally, provides the (R)-glutamate required for cell wall biosynthesis. The sequence is that of Glutamate racemase 2 (yrpC) from Bacillus subtilis (strain 168).